A 142-amino-acid chain; its full sequence is Large ribosomal subunit protein uL23 (142 aa).

This sequence belongs to the universal ribosomal protein uL23 family. In terms of assembly, component of the large ribosomal subunit. Mature ribosomes consist of a small (40S) and a large (60S) subunit. The 40S subunit contains about 32 different proteins and 1 molecule of RNA (18S). The 60S subunit contains 45 different proteins and 3 molecules of RNA (25S, 5.8S and 5S).

It localises to the cytoplasm. Functionally, component of the ribosome, a large ribonucleoprotein complex responsible for the synthesis of proteins in the cell. The small ribosomal subunit (SSU) binds messenger RNAs (mRNAs) and translates the encoded message by selecting cognate aminoacyl-transfer RNA (tRNA) molecules. The large subunit (LSU) contains the ribosomal catalytic site termed the peptidyl transferase center (PTC), which catalyzes the formation of peptide bonds, thereby polymerizing the amino acids delivered by tRNAs into a polypeptide chain. The nascent polypeptides leave the ribosome through a tunnel in the LSU and interact with protein factors that function in enzymatic processing, targeting, and the membrane insertion of nascent chains at the exit of the ribosomal tunnel. RPL25 is a major component of the universal docking site for these factors at the polypeptide exit tunnel. The polypeptide is Large ribosomal subunit protein uL23 (Candida albicans (strain SC5314 / ATCC MYA-2876) (Yeast)).